Consider the following 160-residue polypeptide: Cyclic pyranopterin monophosphate synthase (160 aa).

Substrate is bound by residues 76-78 and 114-115; these read LCH and ME. Aspartate 129 is an active-site residue.

Belongs to the MoaC family. In terms of assembly, homohexamer; trimer of dimers.

The catalysed reaction is (8S)-3',8-cyclo-7,8-dihydroguanosine 5'-triphosphate = cyclic pyranopterin phosphate + diphosphate. It functions in the pathway cofactor biosynthesis; molybdopterin biosynthesis. In terms of biological role, catalyzes the conversion of (8S)-3',8-cyclo-7,8-dihydroguanosine 5'-triphosphate to cyclic pyranopterin monophosphate (cPMP). This Vibrio cholerae serotype O1 (strain ATCC 39541 / Classical Ogawa 395 / O395) protein is Cyclic pyranopterin monophosphate synthase.